The following is a 355-amino-acid chain: Phosphoribosylformylglycinamidine cyclo-ligase (355 aa).

Belongs to the AIR synthase family.

It is found in the cytoplasm. It catalyses the reaction 2-formamido-N(1)-(5-O-phospho-beta-D-ribosyl)acetamidine + ATP = 5-amino-1-(5-phospho-beta-D-ribosyl)imidazole + ADP + phosphate + H(+). The protein operates within purine metabolism; IMP biosynthesis via de novo pathway; 5-amino-1-(5-phospho-D-ribosyl)imidazole from N(2)-formyl-N(1)-(5-phospho-D-ribosyl)glycinamide: step 2/2. The polypeptide is Phosphoribosylformylglycinamidine cyclo-ligase (Paraburkholderia phytofirmans (strain DSM 17436 / LMG 22146 / PsJN) (Burkholderia phytofirmans)).